A 357-amino-acid chain; its full sequence is Serpentine receptor class epsilon-30 (357 aa).

7 helical membrane-spanning segments follow: residues 31–51 (IFEL…IFVM), 61–81 (LMFL…GKFI), 121–141 (LLIF…FGIL), 165–185 (IPII…LAII), 192–212 (FLAR…FLFI), 253–273 (LVVV…ALTF), and 283–303 (LIEN…MFSI).

Belongs to the nematode receptor-like protein sre family.

The protein resides in the membrane. In Caenorhabditis elegans, this protein is Serpentine receptor class epsilon-30 (sre-30).